The chain runs to 208 residues: Large ribosomal subunit protein bL25 (208 aa).

The interval 1-21 (MSNEFSLNAEKRDVQGKGASR) is disordered.

Belongs to the bacterial ribosomal protein bL25 family. CTC subfamily. As to quaternary structure, part of the 50S ribosomal subunit; part of the 5S rRNA/L5/L18/L25 subcomplex. Contacts the 5S rRNA. Binds to the 5S rRNA independently of L5 and L18.

Its function is as follows. This is one of the proteins that binds to the 5S RNA in the ribosome where it forms part of the central protuberance. In Hahella chejuensis (strain KCTC 2396), this protein is Large ribosomal subunit protein bL25.